The following is an 838-amino-acid chain: Periostin (838 aa).

The first 23 residues, 1–23, serve as a signal peptide directing secretion; sequence MVPLLPLYALLLLFLCDINPANA. The 55-residue stretch at 42-96 folds into the EMI domain; the sequence is GPNVCALQQILGTKKKYFSSCKNWYQGAICGKKTTVLYECCPGYMRMEGMKGCPA. 5 cysteine pairs are disulfide-bonded: C46/C82, C71/C335, C81/C94, C210/C313, and C469/C474. An S-cysteinyl cysteine modification is found at C62. FAS1 domains follow at residues 99 to 232, 236 to 367, 370 to 494, and 498 to 630; these read PIDH…DRVL, GTSI…DEVL, DSAK…REII, and EKSL…DKLL. N601 is a glycosylation site (N-linked (GlcNAc...) asparagine). The interval 811–838 is disordered; it reads QGDTPAKKIPANKRVQGPRRRSREGRSQ. Residues 826-838 show a composition bias toward basic residues; that stretch reads QGPRRRSREGRSQ.

As to quaternary structure, homodimer. Interacts with BMP1 and fibronectin. In terms of processing, gamma-carboxylation is controversial. Gamma-carboxyglutamated; gamma-carboxyglutamate residues are formed by vitamin K dependent carboxylation; these residues may be required for binding to calcium. According to a more recent report in human, does not contain vitamin K-dependent gamma-carboxyglutamate residues. As to expression, preferentially expressed in periosteum and periodontal ligament. Also expressed in the developing and adult heart.

The protein resides in the golgi apparatus. The protein localises to the secreted. Its subcellular location is the extracellular space. It localises to the extracellular matrix. Its function is as follows. Induces cell attachment and spreading and plays a role in cell adhesion. Enhances incorporation of BMP1 in the fibronectin matrix of connective tissues, and subsequent proteolytic activation of lysyl oxidase LOX. In Mus musculus (Mouse), this protein is Periostin (Postn).